Here is a 311-residue protein sequence, read N- to C-terminus: Small ribosomal subunit protein uS3 (311 aa).

The region spanning 17 to 86 is the KH type-2 domain; sequence MDEYFAEQLN…NPQIDAQEVK (70 aa). Positions 190 to 267 are disordered; the sequence is PDSYTTTEPS…EPQAEVAEDL (78 aa). Residues 194–204 show a composition bias toward low complexity; the sequence is TTTEPSEPVTE. Positions 205–231 are enriched in basic and acidic residues; that stretch reads PVEKPAEKPAAKPAEKPVEAPKKESAA. The span at 232-247 shows a compositional bias: low complexity; the sequence is KPKTPAVAPEKPVETA. The span at 248 to 267 shows a compositional bias: acidic residues; that stretch reads EVAEPEEAEEEPQAEVAEDL.

It belongs to the universal ribosomal protein uS3 family. Part of the 30S ribosomal subunit.

In terms of biological role, binds the lower part of the 30S subunit head. This Methanosarcina barkeri (strain Fusaro / DSM 804) protein is Small ribosomal subunit protein uS3.